A 386-amino-acid chain; its full sequence is Acetate kinase (386 aa).

Asn-9 serves as a coordination point for Mg(2+). Lys-16 lines the ATP pocket. Residue Arg-74 coordinates substrate. The active-site Proton donor/acceptor is the Asp-131. Residues 191–195 (HLGNG), 265–267 (DFR), and 313–317 (GVGEN) contribute to the ATP site. Mg(2+) is bound at residue Glu-367.

The protein belongs to the acetokinase family. As to quaternary structure, homodimer. Mg(2+) is required as a cofactor. Requires Mn(2+) as cofactor.

Its subcellular location is the cytoplasm. The catalysed reaction is acetate + ATP = acetyl phosphate + ADP. Its pathway is metabolic intermediate biosynthesis; acetyl-CoA biosynthesis; acetyl-CoA from acetate: step 1/2. In terms of biological role, catalyzes the formation of acetyl phosphate from acetate and ATP. Can also catalyze the reverse reaction. The polypeptide is Acetate kinase (Mycolicibacterium gilvum (strain PYR-GCK) (Mycobacterium gilvum (strain PYR-GCK))).